The chain runs to 330 residues: Polygalacturonase inhibitor 2 (330 aa).

A signal peptide spans 1 to 21; the sequence is MDKTMTLFLLLSTLLLTTSLA. 2 disulfide bridges follow: Cys-25–Cys-55 and Cys-56–Cys-63. 10 LRR repeats span residues 69 to 93, 94 to 117, 118 to 141, 142 to 166, 167 to 192, 194 to 215, 217 to 237, 238 to 260, 261 to 285, and 287 to 308; these read NHRVTSLIIQDGEISGQIPPEVGDL, PYLTSLIFRKLTNLTGHIQPTIAK, LKNLTFLRLSWTNLTGPVPEFLSQ, LKNLEYIDLSFNDLSGSIPSSLSSL, RKLEYLELSRNKLTGPIPESFGTFSG, VPSLFLSHNQLSGTIPKSLGNP, FYRIDLSRNKLQGDASILFGA, KKTTWIVDISRNMFQFDLSKVKL, AKTLNNLDMNHNGITGSIPAEWSKA, and FQLLNVSYNRLCGRIPKGEYIQ. Asn-106, Asn-120, and Asn-130 each carry an N-linked (GlcNAc...) asparagine glycan. N-linked (GlcNAc...) asparagine glycosylation is present at Asn-291. 2 cysteine pairs are disulfide-bonded: Cys-298–Cys-320 and Cys-322–Cys-329.

Belongs to the polygalacturonase-inhibiting protein family.

The protein resides in the secreted. It is found in the cell wall. Its subcellular location is the membrane. Inhibitor of fungal polygalacturonase. It is an important factor for plant resistance to phytopathogenic fungi. This is Polygalacturonase inhibitor 2 (PGIP2) from Arabidopsis thaliana (Mouse-ear cress).